The sequence spans 404 residues: Probable tRNA sulfurtransferase (404 aa).

Residues 60 to 165 (EEVIPKLSKV…KDAAYLSYET (106 aa)) enclose the THUMP domain. Residues 183–184 (ML), 208–209 (HF), arginine 265, glycine 287, and glutamine 296 contribute to the ATP site.

Belongs to the ThiI family.

It is found in the cytoplasm. It carries out the reaction [ThiI sulfur-carrier protein]-S-sulfanyl-L-cysteine + a uridine in tRNA + 2 reduced [2Fe-2S]-[ferredoxin] + ATP + H(+) = [ThiI sulfur-carrier protein]-L-cysteine + a 4-thiouridine in tRNA + 2 oxidized [2Fe-2S]-[ferredoxin] + AMP + diphosphate. The catalysed reaction is [ThiS sulfur-carrier protein]-C-terminal Gly-Gly-AMP + S-sulfanyl-L-cysteinyl-[cysteine desulfurase] + AH2 = [ThiS sulfur-carrier protein]-C-terminal-Gly-aminoethanethioate + L-cysteinyl-[cysteine desulfurase] + A + AMP + 2 H(+). It participates in cofactor biosynthesis; thiamine diphosphate biosynthesis. Its function is as follows. Catalyzes the ATP-dependent transfer of a sulfur to tRNA to produce 4-thiouridine in position 8 of tRNAs, which functions as a near-UV photosensor. Also catalyzes the transfer of sulfur to the sulfur carrier protein ThiS, forming ThiS-thiocarboxylate. This is a step in the synthesis of thiazole, in the thiamine biosynthesis pathway. The sulfur is donated as persulfide by IscS. This is Probable tRNA sulfurtransferase from Enterococcus faecalis (strain ATCC 700802 / V583).